The following is a 214-amino-acid chain: Large ribosomal subunit protein uL3 (214 aa).

The interval 131–153 (KSQRASHGNSRSHNVPGSIGMAQ) is disordered. Over residues 132–145 (SQRASHGNSRSHNV) the composition is skewed to polar residues. N5-methylglutamine is present on Gln153.

The protein belongs to the universal ribosomal protein uL3 family. As to quaternary structure, part of the 50S ribosomal subunit. Forms a cluster with proteins L14 and L19. Post-translationally, methylated by PrmB.

Functionally, one of the primary rRNA binding proteins, it binds directly near the 3'-end of the 23S rRNA, where it nucleates assembly of the 50S subunit. In Thiobacillus denitrificans (strain ATCC 25259 / T1), this protein is Large ribosomal subunit protein uL3.